The chain runs to 464 residues: MAVYNYDVVVLGSGPAGEGAAMNAAKAGRKVAMVDDRRQVGGNCTHLGTIPSKALRHSVRQIMQFNTNPMFRAIGEPRWFSFPDVLKSAEKVISKQVASRTGYYARNRVDVFFGTGSFADEQTVEVVCPNGVVEKLNAKHIIIATGSRPYRPADIDFHHPRVYDSDTILSLSHTPRKLIVYGAGVIGCEYASIFSGLGVLVELVDNRGQLLSFLDSEISQALSYHFSNNNITVRHNEEYERVEGLDNGVILHLKSGKKIKADALLWCNGRTGNTDKLGLENIGIKVNSRGQIEVDEAYRTTVPNIYGAGDVIGWPSLASAAHDQGRSAAGSIVDNGSWRFVNDVPTGIYTIPEISSIGKNEQELTQAKVPYEVGKAFFKGMARAQIAGEPQGMLKILFHRETLEILGVHCFGYQASEIVHIGQAIMNQPGEHNNLKYFVNTTFNYPTMAEAYRVAAYDGLNRLF.

35–44 lines the FAD pocket; sequence DDRRQVGGNC.

The protein belongs to the class-I pyridine nucleotide-disulfide oxidoreductase family. Requires FAD as cofactor.

It localises to the cytoplasm. The catalysed reaction is NAD(+) + NADPH = NADH + NADP(+). In terms of biological role, conversion of NADPH, generated by peripheral catabolic pathways, to NADH, which can enter the respiratory chain for energy generation. The protein is Soluble pyridine nucleotide transhydrogenase of Pseudomonas putida (strain GB-1).